The primary structure comprises 137 residues: Large ribosomal subunit protein uL16 (137 aa).

Belongs to the universal ribosomal protein uL16 family. In terms of assembly, part of the 50S ribosomal subunit.

Its function is as follows. Binds 23S rRNA and is also seen to make contacts with the A and possibly P site tRNAs. The polypeptide is Large ribosomal subunit protein uL16 (Baumannia cicadellinicola subsp. Homalodisca coagulata).